A 193-amino-acid chain; its full sequence is Proton-translocating ferredoxin:NAD(+) oxidoreductase complex subunit A (193 aa).

6 helical membrane-spanning segments follow: residues 11–31 (AVVV…FFGV), 39–59 (VGMG…AWVV), 62–82 (FVLI…LLIA), 102–122 (MWGI…VPIL), 134–154 (VVNA…MASL), and 171–191 (GVAF…SGMI).

Belongs to the NqrDE/RnfAE family. The complex is composed of six subunits: RnfA, RnfB, RnfC, RnfD, RnfE and RnfG.

It is found in the cell membrane. Its function is as follows. Part of a membrane-bound complex that couples electron transfer with translocation of ions across the membrane. Couples electron transfer from reduced ferredoxin to NAD(+) with translocation of H(+) out of the cell. Essential for energy conservation during autotrophic growth. Contributes to ATP synthesis during heterotrophic growth. The sequence is that of Proton-translocating ferredoxin:NAD(+) oxidoreductase complex subunit A from Clostridium ljungdahlii (strain ATCC 55383 / DSM 13528 / PETC).